The chain runs to 308 residues: Eukaryotic translation initiation factor 3 subunit G (308 aa).

The segment at 1–23 (MAPVAAPSTSQPAGGKPMNWADE) is disordered. Positions 225 to 303 (PTLRVTNLSE…LILSCQWSLP (79 aa)) constitute an RRM domain.

The protein belongs to the eIF-3 subunit G family. As to quaternary structure, component of the eukaryotic translation initiation factor 3 (eIF-3) complex.

It localises to the cytoplasm. RNA-binding component of the eukaryotic translation initiation factor 3 (eIF-3) complex, which is involved in protein synthesis of a specialized repertoire of mRNAs and, together with other initiation factors, stimulates binding of mRNA and methionyl-tRNAi to the 40S ribosome. The eIF-3 complex specifically targets and initiates translation of a subset of mRNAs involved in cell proliferation. This subunit can bind 18S rRNA. The chain is Eukaryotic translation initiation factor 3 subunit G from Mycosarcoma maydis (Corn smut fungus).